The primary structure comprises 368 residues: MQTNFSQPQTFNPADITRNVIDNNQDDMVDSLDSDEEDLDLDLDLELSDEQEIAHKGVKSARFKKLQKKLRKQVSHAIRDFNMIEDGDVVMVCVSGGKDSYTLLDILLFLKRIAPINFDVVAVNLDQKQPGYPEEVLPNYLQQQGIPHYILEKDTYSVVKSVVPEGKTYCSACSRLRRGSLYGFAKQIGATKIALGHHRDDILATFFLNLFHGGSLKAMPPKLLSDDKQNVLIRPLAYVEEKDIIKYARYKEFPIIPCNLCGSQENLQRAMINDMLRQWDDAHPQRLASIFKAMQNVAPSQLADRELFDFESLTLQRDDSKRDFEGHNIQVGVANELAEIGLPTQPDIKPFESATAAKKIPTINPIID.

Positions Ser-95–Ser-100 match the PP-loop motif motif. The [4Fe-4S] cluster site is built by Cys-170, Cys-173, and Cys-261.

The protein belongs to the TtcA family. In terms of assembly, homodimer. It depends on Mg(2+) as a cofactor. Requires [4Fe-4S] cluster as cofactor.

The protein resides in the cytoplasm. It catalyses the reaction cytidine(32) in tRNA + S-sulfanyl-L-cysteinyl-[cysteine desulfurase] + AH2 + ATP = 2-thiocytidine(32) in tRNA + L-cysteinyl-[cysteine desulfurase] + A + AMP + diphosphate + H(+). It functions in the pathway tRNA modification. Its function is as follows. Catalyzes the ATP-dependent 2-thiolation of cytidine in position 32 of tRNA, to form 2-thiocytidine (s(2)C32). The sulfur atoms are provided by the cysteine/cysteine desulfurase (IscS) system. This chain is tRNA-cytidine(32) 2-sulfurtransferase, found in Psychrobacter sp. (strain PRwf-1).